A 796-amino-acid polypeptide reads, in one-letter code: Protein translocase subunit SecA 2 (796 aa).

Residues Gln84, 102–106 (GEGKT), and Asp496 each bind ATP.

Belongs to the SecA family. Monomer and homodimer. Part of the essential Sec protein translocation apparatus which comprises SecA, SecYEG and auxiliary proteins SecDF. Other proteins may also be involved.

The protein localises to the cell membrane. Its subcellular location is the cytoplasm. The catalysed reaction is ATP + H2O + cellular proteinSide 1 = ADP + phosphate + cellular proteinSide 2.. Functionally, part of the Sec protein translocase complex. Interacts with the SecYEG preprotein conducting channel. Has a central role in coupling the hydrolysis of ATP to the transfer of proteins into and across the cell membrane, serving as an ATP-driven molecular motor driving the stepwise translocation of polypeptide chains across the membrane. The chain is Protein translocase subunit SecA 2 from Staphylococcus epidermidis (strain ATCC 12228 / FDA PCI 1200).